The following is a 116-amino-acid chain: Protein AV2 (116 aa).

This sequence belongs to the geminiviridae protein AV2/V2 family. Interacts with host SGS3.

It localises to the host cytoplasm. The protein localises to the host perinuclear region. Functionally, through its interaction with host SGS3, acts as a suppressor of RNA-mediated gene silencing, also known as post-transcriptional gene silencing (PTGS), a mechanism of plant viral defense that limits the accumulation of viral RNAs. This chain is Protein AV2, found in Mungbean yellow mosaic virus (strain Vigna) (MYMV).